The following is a 264-amino-acid chain: tRNA (guanine-N(1)-)-methyltransferase (264 aa).

Residues G125 and 145 to 150 (LGDFVL) each bind S-adenosyl-L-methionine.

Belongs to the RNA methyltransferase TrmD family. Homodimer.

The protein resides in the cytoplasm. It carries out the reaction guanosine(37) in tRNA + S-adenosyl-L-methionine = N(1)-methylguanosine(37) in tRNA + S-adenosyl-L-homocysteine + H(+). In terms of biological role, specifically methylates guanosine-37 in various tRNAs. In Burkholderia ambifaria (strain MC40-6), this protein is tRNA (guanine-N(1)-)-methyltransferase.